Reading from the N-terminus, the 444-residue chain is Multidrug resistance protein MdtA (444 aa).

An N-terminal signal peptide occupies residues 1–20 (MKSQSKRTSRLFVFVGVVVA). Polar residues predominate over residues 37–52 (NNTSGAQQSARGQDTS). Disordered stretches follow at residues 37-60 (NNTSGAQQSARGQDTSHGGRRNTP) and 399-444 (PRSA…AEKS). The segment covering 409–419 (ASAEKAAAEAE) has biased composition (low complexity). Positions 435–444 (ARSTTAAEKS) are enriched in polar residues.

Belongs to the membrane fusion protein (MFP) (TC 8.A.1) family. As to quaternary structure, part of a tripartite efflux system composed of MdtA, MdtB and MdtC.

Its subcellular location is the cell inner membrane. This chain is Multidrug resistance protein MdtA, found in Yersinia pseudotuberculosis serotype I (strain IP32953).